We begin with the raw amino-acid sequence, 287 residues long: Neugrin (287 aa).

The signal sequence occupies residues 1-23 (MAFSPNVLLGGRVCAAVARSGFA). The disordered stretch occupies residues 149 to 169 (SIPELPGPGDSSKPLSAGQSV). Residue N202 is glycosylated (N-linked (GlcNAc...) asparagine).

It belongs to the neugrin family. As to quaternary structure, forms a regulatory protein-RNA complex, consisting of RCC1L, NGRN, RPUSD3, RPUSD4, TRUB2, FASTKD2 and 16S mt-rRNA. Interacts with 16S mt-rRNA; this interaction is direct.

The protein resides in the nucleus. The protein localises to the secreted. It localises to the mitochondrion membrane. Functionally, plays an essential role in mitochondrial ribosome biogenesis. As a component of a functional protein-RNA module, consisting of RCC1L, NGRN, RPUSD3, RPUSD4, TRUB2, FASTKD2 and 16S mitochondrial ribosomal RNA (16S mt-rRNA), controls 16S mt-rRNA abundance and is required for intra-mitochondrial translation of core subunits of the oxidative phosphorylation system. The protein is Neugrin (NGRN) of Bos taurus (Bovine).